The primary structure comprises 158 residues: NADH-quinone oxidoreductase subunit B (158 aa).

Cysteine 37, cysteine 38, cysteine 102, and cysteine 132 together coordinate [4Fe-4S] cluster.

It belongs to the complex I 20 kDa subunit family. In terms of assembly, NDH-1 is composed of 14 different subunits. Subunits NuoB, C, D, E, F, and G constitute the peripheral sector of the complex. [4Fe-4S] cluster is required as a cofactor.

The protein localises to the cell inner membrane. The enzyme catalyses a quinone + NADH + 5 H(+)(in) = a quinol + NAD(+) + 4 H(+)(out). NDH-1 shuttles electrons from NADH, via FMN and iron-sulfur (Fe-S) centers, to quinones in the respiratory chain. The immediate electron acceptor for the enzyme in this species is believed to be ubiquinone. Couples the redox reaction to proton translocation (for every two electrons transferred, four hydrogen ions are translocated across the cytoplasmic membrane), and thus conserves the redox energy in a proton gradient. The chain is NADH-quinone oxidoreductase subunit B from Thiobacillus denitrificans (strain ATCC 25259 / T1).